The following is a 392-amino-acid chain: Chaperone protein DnaJ 2 (392 aa).

One can recognise a J domain in the interval 10 to 75; that stretch reads DFYKELGVSS…AKRKEYDETR (66 aa). The CR-type zinc finger occupies 161–239; it reads GVAMPLRLTS…CKGTGVTTRT (79 aa). The Zn(2+) site is built by Cys-174, Cys-177, Cys-191, Cys-194, Cys-213, Cys-216, Cys-227, and Cys-230. CXXCXGXG motif repeat units follow at residues 174–181, 191–198, 213–220, and 227–234; these read CTNCHGSG, CPTCNGSG, CTDCRGSG, and CDECKGTG.

Belongs to the DnaJ family. As to quaternary structure, homodimer. Requires Zn(2+) as cofactor.

Its subcellular location is the cytoplasm. Participates actively in the response to hyperosmotic and heat shock by preventing the aggregation of stress-denatured proteins and by disaggregating proteins, also in an autonomous, DnaK-independent fashion. Unfolded proteins bind initially to DnaJ; upon interaction with the DnaJ-bound protein, DnaK hydrolyzes its bound ATP, resulting in the formation of a stable complex. GrpE releases ADP from DnaK; ATP binding to DnaK triggers the release of the substrate protein, thus completing the reaction cycle. Several rounds of ATP-dependent interactions between DnaJ, DnaK and GrpE are required for fully efficient folding. Also involved, together with DnaK and GrpE, in the DNA replication of plasmids through activation of initiation proteins. In Mycolicibacterium paratuberculosis (strain ATCC BAA-968 / K-10) (Mycobacterium paratuberculosis), this protein is Chaperone protein DnaJ 2.